The chain runs to 565 residues: NAD-dependent malic enzyme (565 aa).

Y104 (proton donor) is an active-site residue. An NAD(+)-binding site is contributed by R157. K175 serves as the catalytic Proton acceptor. E246, D247, and D270 together coordinate a divalent metal cation. Residues D270 and N418 each contribute to the NAD(+) site.

Belongs to the malic enzymes family. As to quaternary structure, homotetramer. It depends on Mg(2+) as a cofactor. Requires Mn(2+) as cofactor.

It carries out the reaction (S)-malate + NAD(+) = pyruvate + CO2 + NADH. It catalyses the reaction oxaloacetate + H(+) = pyruvate + CO2. This Salmonella agona (strain SL483) protein is NAD-dependent malic enzyme.